The chain runs to 323 residues: Glyoxylate/hydroxypyruvate reductase HPR3 (323 aa).

NADP(+) is bound by residues L160–I163, S182–S184, and V238–R240. Residues R240 and E269 contribute to the active site. Catalysis depends on H287, which acts as the Proton donor. NADP(+) is bound at residue H287 to A289.

The protein belongs to the D-isomer specific 2-hydroxyacid dehydrogenase family. GyaR subfamily. In terms of assembly, homodimer.

It carries out the reaction glycolate + NADP(+) = glyoxylate + NADPH + H(+). It catalyses the reaction (R)-glycerate + NADP(+) = 3-hydroxypyruvate + NADPH + H(+). Its activity is regulated as follows. Inhibited by oxalate. In terms of biological role, catalyzes the NADPH-dependent reduction of glyoxylate and hydroxypyruvate (HP) into glycolate and glycerate. Mostly active in the presence of NADPH and glyoxylate. The protein is Glyoxylate/hydroxypyruvate reductase HPR3 (HPR3) of Arabidopsis thaliana (Mouse-ear cress).